Reading from the N-terminus, the 369-residue chain is Glutamine synthetase 2 cytoplasmic (369 aa).

Residues 32–112 (VQATYVWIDG…VMCDTYKFDG (81 aa)) enclose the GS beta-grasp domain. Positions 119–369 (KRKTCLEVAN…AILRTICLDE (251 aa)) constitute a GS catalytic domain.

It belongs to the glutamine synthetase family. Homooctamer.

The protein localises to the cytoplasm. The enzyme catalyses L-glutamate + NH4(+) + ATP = L-glutamine + ADP + phosphate + H(+). The polypeptide is Glutamine synthetase 2 cytoplasmic (Gs2) (Drosophila melanogaster (Fruit fly)).